The sequence spans 111 residues: MNQNTLYVNNLNDKINKNDLRTALYMLFSTYGTVVDIVALKTPKMRGQAHVVFFDPSAAAIAMKALKNFIFFGKEMKIQYAHSKSKIIERIVAENDSRGPLKRLRDEADLE.

Residues Asn4–Ser83 enclose the RRM domain.

Belongs to the 40S cdc5-associated complex (or cwf complex), a spliceosome sub-complex reminiscent of a late-stage spliceosome composed of the U2, U5 and U6 snRNAs and at least brr2, cdc5, cwf2/prp3, cwf3/syf1, cwf4/syf3, cwf5/ecm2, spp42/cwf6, cwf7/spf27, cwf8, cwf9, cwf10, cwf11, cwf12, prp45/cwf13, cwf14, cwf15, cwf16, cwf17, cwf18, cwf19, cwf20, cwf21, cwf22, cwf23, cwf24, cwf25, cwf26, cyp7/cwf27, cwf28, cwf29/ist3, lea1, msl1, prp5/cwf1, prp10, prp12/sap130, prp17, prp22, sap61, sap62, sap114, sap145, slu7, smb1, smd1, smd3, smf1, smg1 and syf2.

The protein resides in the nucleus. Its function is as follows. Involved in pre-mRNA splicing. This protein is associated with snRNP U2. It binds stem loop IV of U2 snRNA. The chain is Probable U2 small nuclear ribonucleoprotein B'' (msl1) from Schizosaccharomyces pombe (strain 972 / ATCC 24843) (Fission yeast).